A 559-amino-acid chain; its full sequence is Coiled-coil domain-containing protein 78 (559 aa).

The segment covering 1-19 (MDSTEDRETPLKDQIRRLT) has biased composition (basic and acidic residues). The disordered stretch occupies residues 1–20 (MDSTEDRETPLKDQIRRLTN). 2 coiled-coil regions span residues 9 to 327 (TPLK…ADYV) and 419 to 541 (QSQV…AVSA).

Belongs to the CCDC78 family. Restricted to multiciliated cells.

The protein localises to the cytoplasm. Its subcellular location is the cytoskeleton. It is found in the microtubule organizing center. The protein resides in the centrosome. It localises to the centriole. Its function is as follows. Component of the deuterosome, a structure that promotes de novo centriole amplification in multiciliated cells that can generate more than 100 centrioles. Deuterosome-mediated centriole amplification occurs in terminally differentiated multiciliated cells (G1/0) and not in S phase. Essential for centriole amplification and is required for cep152 localization to the deuterosome. The protein is Coiled-coil domain-containing protein 78 (ccdc78) of Xenopus laevis (African clawed frog).